Reading from the N-terminus, the 407-residue chain is CCA-adding enzyme (407 aa).

ATP-binding residues include glycine 32 and arginine 35. Glycine 32 and arginine 35 together coordinate CTP. Mg(2+)-binding residues include aspartate 45 and aspartate 47. ATP contacts are provided by arginine 116, aspartate 159, arginine 162, arginine 165, and arginine 168. CTP contacts are provided by arginine 116, aspartate 159, arginine 162, arginine 165, and arginine 168.

This sequence belongs to the tRNA nucleotidyltransferase/poly(A) polymerase family. Bacterial CCA-adding enzyme type 3 subfamily. Homodimer. Requires Mg(2+) as cofactor.

The enzyme catalyses a tRNA precursor + 2 CTP + ATP = a tRNA with a 3' CCA end + 3 diphosphate. It carries out the reaction a tRNA with a 3' CCA end + 2 CTP + ATP = a tRNA with a 3' CCACCA end + 3 diphosphate. In terms of biological role, catalyzes the addition and repair of the essential 3'-terminal CCA sequence in tRNAs without using a nucleic acid template. Adds these three nucleotides in the order of C, C, and A to the tRNA nucleotide-73, using CTP and ATP as substrates and producing inorganic pyrophosphate. tRNA 3'-terminal CCA addition is required both for tRNA processing and repair. Also involved in tRNA surveillance by mediating tandem CCA addition to generate a CCACCA at the 3' terminus of unstable tRNAs. While stable tRNAs receive only 3'-terminal CCA, unstable tRNAs are marked with CCACCA and rapidly degraded. This Lactiplantibacillus plantarum (strain ATCC BAA-793 / NCIMB 8826 / WCFS1) (Lactobacillus plantarum) protein is CCA-adding enzyme.